Consider the following 162-residue polypeptide: Caveolin-2 (162 aa).

At 1–86 (MGLETEKADV…FEISKYVMYK (86 aa)) the chain is on the cytoplasmic side. Tyr19 is modified (phosphotyrosine; by SRC). Ser20 carries the post-translational modification Phosphoserine. Tyr27 carries the phosphotyrosine; by SRC modification. The residue at position 36 (Ser36) is a Phosphoserine. Positions 87–107 (FLTVFLAIPLAFAAGILFATL) form an intramembrane region, helical. Residues 108–162 (SCLHIWIIMPFVKTCLMVLPSVQTIWKSVTDVIIAPLCTSVGRSLSSISLQLSHD) are Cytoplasmic-facing.

The protein belongs to the caveolin family. As to quaternary structure, monomer or homodimer. Interacts with CAV1; the interaction forms a stable heterooligomeric complex that is required for targeting to lipid rafts and for caveolae formation. Tyrosine phosphorylated forms do not form heterooligomers with the Tyr-19-phosphorylated form existing as a monomer or dimer, and the Tyr-27-form as a monomer only. Interacts (tyrosine phosphorylated form) with the SH2 domain-containing proteins, RASA1, NCK1 and SRC. Interacts (tyrosine phosphorylated form) with INSR, the interaction (Tyr-27-phosphorylated form) is increased on insulin stimulation. Interacts (Tyr-19 phosphorylated form) with MAPK1 (phosphorylated form); the interaction, promoted by insulin, leads to nuclear location and MAPK1 activation. Interacts with STAT3; the interaction is increased on insulin-induced tyrosine phosphorylation leading to STAT activation. Post-translationally, phosphorylated on serine and tyrosine residues. Phosphorylation on Ser-36 appears to modulate mitosis in endothelial cells. Phosphorylation on both Tyr-19 and Tyr-27 is required for insulin-induced 'Ser-727' phosphorylation of STAT3 and its activation. Phosphorylation on Tyr-19 is required for insulin-induced phosphorylation of MAPK1 and DNA binding of STAT3. Tyrosine phosphorylation is induced by both EGF and insulin.

It localises to the nucleus. The protein resides in the cytoplasm. It is found in the golgi apparatus membrane. Its subcellular location is the cell membrane. The protein localises to the membrane. It localises to the caveola. Functionally, may act as a scaffolding protein within caveolar membranes. Interacts directly with G-protein alpha subunits and can functionally regulate their activity. Acts as an accessory protein in conjunction with CAV1 in targeting to lipid rafts and driving caveolae formation. The Ser-36 phosphorylated form has a role in modulating mitosis in endothelial cells. Positive regulator of cellular mitogenesis of the MAPK signaling pathway. Required for the insulin-stimulated nuclear translocation and activation of MAPK1 and STAT3, and the subsequent regulation of cell cycle progression. This Eulemur macaco macaco (Black lemur) protein is Caveolin-2 (CAV2).